We begin with the raw amino-acid sequence, 145 residues long: Large ribosomal subunit protein uL11 (145 aa).

It belongs to the universal ribosomal protein uL11 family. In terms of assembly, part of the ribosomal stalk of the 50S ribosomal subunit. Interacts with L10 and the large rRNA to form the base of the stalk. L10 forms an elongated spine to which L12 dimers bind in a sequential fashion forming a multimeric L10(L12)X complex. In terms of processing, one or more lysine residues are methylated.

Functionally, forms part of the ribosomal stalk which helps the ribosome interact with GTP-bound translation factors. The polypeptide is Large ribosomal subunit protein uL11 (Francisella philomiragia subsp. philomiragia (strain ATCC 25017 / CCUG 19701 / FSC 153 / O#319-036)).